The following is a 277-amino-acid chain: Proteasome subunit beta type-7 (277 aa).

Residues 1-43 (MAAVSVYAPPVGGFSFDNCRRNAVLEADFAKRGYKLPKVRKTG) constitute a propeptide, removed in mature form. T44 acts as the Nucleophile in catalysis.

This sequence belongs to the peptidase T1B family. As to quaternary structure, the 26S proteasome consists of a 20S proteasome core and two 19S regulatory subunits. The 20S proteasome core is a barrel-shaped complex made of 28 subunits that are arranged in four stacked rings. The two outer rings are each formed by seven alpha subunits, and the two inner rings are formed by seven beta subunits. The proteolytic activity is exerted by three beta-subunits PSMB5, PSMB6 and PSMB7. In terms of assembly, (Microbial infection) Interacts with HIV-1 Tat protein. As to expression, expressed at a low level in colonic mucosa. Up-regulated in colorectal cancer tissues.

The protein resides in the cytoplasm. The protein localises to the nucleus. The catalysed reaction is Cleavage of peptide bonds with very broad specificity.. Component of the 20S core proteasome complex involved in the proteolytic degradation of most intracellular proteins. This complex plays numerous essential roles within the cell by associating with different regulatory particles. Associated with two 19S regulatory particles, forms the 26S proteasome and thus participates in the ATP-dependent degradation of ubiquitinated proteins. The 26S proteasome plays a key role in the maintenance of protein homeostasis by removing misfolded or damaged proteins that could impair cellular functions, and by removing proteins whose functions are no longer required. Associated with the PA200 or PA28, the 20S proteasome mediates ubiquitin-independent protein degradation. This type of proteolysis is required in several pathways including spermatogenesis (20S-PA200 complex) or generation of a subset of MHC class I-presented antigenic peptides (20S-PA28 complex). Within the 20S core complex, PSMB7 displays a trypsin-like activity. The protein is Proteasome subunit beta type-7 of Homo sapiens (Human).